Consider the following 83-residue polypeptide: MLGMYLTTAFNFLTASTPKTMSEGMTGIWTGLSSALWKVKEGITNILPEIMVFLGEAWIILIPFAIFCIIKILNFFRVMVKGF.

A helical transmembrane segment spans residues 50–70; that stretch reads IMVFLGEAWIILIPFAIFCII.

This sequence belongs to the plectrovirus ORF7 family.

The protein resides in the host membrane. This is an uncharacterized protein from Spiroplasma citri (SpV1).